Consider the following 444-residue polypeptide: Gentisate transporter (444 aa).

Helical transmembrane passes span 42–64 (AAVL…YGTV), 79–101 (LGTI…GRLS), 108–127 (AAVI…CAFA), 131–153 (WVFG…SVNA), 166–188 (AWAT…LALV), 198–220 (WRFM…MKVI), 252–274 (WISI…LGTW), 289–311 (ALMF…AWAG), 318–340 (RSGV…YPPV), 344–366 (YVIL…AAVA), 378–400 (LGWA…GLLL), and 410–428 (FIMF…SVLL).

It belongs to the major facilitator superfamily. Aromatic acid:H(+) symporter (AAHS) (TC 2.A.1.15) family.

The protein resides in the cell membrane. Transport of gentisate (2,5-dihydroxybenzoate) into the cell. Does not transport 3-hydroxybenzoate or benzoate. The chain is Gentisate transporter (genK) from Corynebacterium glutamicum (strain ATCC 13032 / DSM 20300 / JCM 1318 / BCRC 11384 / CCUG 27702 / LMG 3730 / NBRC 12168 / NCIMB 10025 / NRRL B-2784 / 534).